A 115-amino-acid chain; its full sequence is NADH-ubiquinone oxidoreductase chain 3 (115 aa).

The next 3 helical transmembrane spans lie at 3–23 (FVLALTVNTLLALLLMTITFW), 55–75 (FFLVAITFLLFDLEIALLLPL), and 84–104 (LPLMTTSSLMLIIILALGLTY).

The protein belongs to the complex I subunit 3 family. As to quaternary structure, core subunit of respiratory chain NADH dehydrogenase (Complex I) which is composed of 45 different subunits. Interacts with TMEM186. Interacts with TMEM242.

The protein localises to the mitochondrion inner membrane. It catalyses the reaction a ubiquinone + NADH + 5 H(+)(in) = a ubiquinol + NAD(+) + 4 H(+)(out). Its function is as follows. Core subunit of the mitochondrial membrane respiratory chain NADH dehydrogenase (Complex I) which catalyzes electron transfer from NADH through the respiratory chain, using ubiquinone as an electron acceptor. Essential for the catalytic activity of complex I. The protein is NADH-ubiquinone oxidoreductase chain 3 of Pongo abelii (Sumatran orangutan).